The primary structure comprises 261 residues: Putative hydro-lyase SH0274 (261 aa).

Belongs to the D-glutamate cyclase family.

This Staphylococcus haemolyticus (strain JCSC1435) protein is Putative hydro-lyase SH0274.